A 1513-amino-acid chain; its full sequence is DNA-directed RNA polymerase subunit beta'' (1513 aa).

4 residues coordinate Zn(2+): cysteine 220, cysteine 296, cysteine 303, and cysteine 306. Positions 644–769 (RTREKDSENE…EYGNPEEDSV (126 aa)) are disordered. Over residues 659–679 (NEYRTREEECKTLEDEYRTRE) the composition is skewed to basic and acidic residues. The segment covering 680-707 (EEYETLEDEYGIPENEYETLEDEYGILE) has biased composition (acidic residues). Residues 726-737 (NKYRPREDKYGT) show a composition bias toward basic and acidic residues. Residues 738–767 (LEEDSEDEHGTLEEDSEEDSEDEYGNPEED) are compositionally biased toward acidic residues.

The protein belongs to the RNA polymerase beta' chain family. RpoC2 subfamily. In terms of assembly, in plastids the minimal PEP RNA polymerase catalytic core is composed of four subunits: alpha, beta, beta', and beta''. When a (nuclear-encoded) sigma factor is associated with the core the holoenzyme is formed, which can initiate transcription. The cofactor is Zn(2+).

It is found in the plastid. Its subcellular location is the chloroplast. It carries out the reaction RNA(n) + a ribonucleoside 5'-triphosphate = RNA(n+1) + diphosphate. Functionally, DNA-dependent RNA polymerase catalyzes the transcription of DNA into RNA using the four ribonucleoside triphosphates as substrates. In Oryza sativa (Rice), this protein is DNA-directed RNA polymerase subunit beta''.